The following is an 816-amino-acid chain: Phosphatidylinositol 4-kinase beta (816 aa).

3 disordered regions span residues 1–30 (MGDM…GSLL), 101–120 (EDEM…RRRR), and 250–318 (RKRE…SFSS). The residue at position 2 (glycine 2) is an N-acetylglycine. Residues 2-68 (GDMVVEPATL…VKLLHGGVAI (67 aa)) are interaction with ACBD3. Positions 10–30 (TLKPTSEPTPSPSGNNGGSLL) are enriched in low complexity. One can recognise a PIK helical domain in the interval 52–242 (CQEVLEKVKL…GTKLRKLILS (191 aa)). Serine 258 is subject to Phosphoserine. The residue at position 263 (threonine 263) is a Phosphothreonine. 5 positions are modified to phosphoserine: serine 266, serine 275, serine 277, serine 284, and serine 294. Polar residues-rich tracts occupy residues 278 to 297 (DATA…SNPK) and 306 to 318 (SSST…SFSS). Position 428 is a phosphoserine (serine 428). A Phosphothreonine modification is found at threonine 438. Serine 511 carries the phosphoserine modification. A phosphothreonine mark is found at threonine 517 and threonine 519. One can recognise a PI3K/PI4K catalytic domain in the interval 535–801 (EPWQEKVRRI…MVDGSMRSIT (267 aa)). A G-loop region spans residues 541-547 (VRRIREG). The tract at residues 668 to 676 (QVKDRHNGN) is catalytic loop. The tract at residues 687 to 711 (HIDFGFILSSSPRNLGFETSAFKLT) is activation loop.

Belongs to the PI3/PI4-kinase family. Type III PI4K subfamily. In terms of assembly, interacts with ARF1 and ARF3 in the Golgi complex, but not with ARF4, ARF5 or ARF6. Interacts with NCS1/FREQ in a calcium-independent manner. Interacts with CALN1/CABP8 and CALN2/CABP7; in a calcium-dependent manner; this interaction competes with NCS1/FREQ binding. Interacts with ACBD3. Interacts with ARMH3, YWHAB, YWHAE, YWHAG, YWHAH, YWHAQ, YWHAZ and SFN. Interacts with GGA2 (via VHS domain); the interaction is important for PI4KB location at the Golgi apparatus membrane. Interacts with ATG9A. It depends on Mg(2+) as a cofactor. Mn(2+) serves as cofactor.

The protein resides in the endomembrane system. Its subcellular location is the mitochondrion outer membrane. It localises to the rough endoplasmic reticulum membrane. It is found in the golgi apparatus. The protein localises to the golgi apparatus membrane. It carries out the reaction a 1,2-diacyl-sn-glycero-3-phospho-(1D-myo-inositol) + ATP = a 1,2-diacyl-sn-glycero-3-phospho-(1D-myo-inositol 4-phosphate) + ADP + H(+). Inhibited by wortmannin. Increased kinase activity upon interaction with NCS1/FREQ. Its function is as follows. Phosphorylates phosphatidylinositol (PI) in the first committed step in the production of the second messenger inositol-1,4,5,-trisphosphate (PIP). May regulate Golgi disintegration/reorganization during mitosis, possibly via its phosphorylation. Involved in Golgi-to-plasma membrane trafficking. May play an important role in the inner ear development. In Mus musculus (Mouse), this protein is Phosphatidylinositol 4-kinase beta (Pi4kb).